A 139-amino-acid polypeptide reads, in one-letter code: Large ribosomal subunit protein bL17 (139 aa).

Belongs to the bacterial ribosomal protein bL17 family. As to quaternary structure, part of the 50S ribosomal subunit. Contacts protein L32.

This Sphingopyxis alaskensis (strain DSM 13593 / LMG 18877 / RB2256) (Sphingomonas alaskensis) protein is Large ribosomal subunit protein bL17.